A 289-amino-acid chain; its full sequence is Pantothenate synthetase (289 aa).

An ATP-binding site is contributed by 33–40 (MGNLHDGH). His40 serves as the catalytic Proton donor. A (R)-pantoate-binding site is contributed by Gln64. Gln64 is a beta-alanine binding site. Position 155-158 (155-158 (GKKD)) interacts with ATP. Gln161 contacts (R)-pantoate. ATP contacts are provided by residues Ala184 and 192–195 (LSSR).

The protein belongs to the pantothenate synthetase family. Homodimer.

The protein resides in the cytoplasm. It carries out the reaction (R)-pantoate + beta-alanine + ATP = (R)-pantothenate + AMP + diphosphate + H(+). Its pathway is cofactor biosynthesis; (R)-pantothenate biosynthesis; (R)-pantothenate from (R)-pantoate and beta-alanine: step 1/1. Its function is as follows. Catalyzes the condensation of pantoate with beta-alanine in an ATP-dependent reaction via a pantoyl-adenylate intermediate. This Acidovorax sp. (strain JS42) protein is Pantothenate synthetase.